The chain runs to 69 residues: Putative membrane protein insertion efficiency factor (69 aa).

Belongs to the UPF0161 family.

It localises to the cell inner membrane. Could be involved in insertion of integral membrane proteins into the membrane. In Azoarcus sp. (strain BH72), this protein is Putative membrane protein insertion efficiency factor.